The sequence spans 234 residues: 2-C-methyl-D-erythritol 4-phosphate cytidylyltransferase (234 aa).

It belongs to the IspD/TarI cytidylyltransferase family. IspD subfamily.

The catalysed reaction is 2-C-methyl-D-erythritol 4-phosphate + CTP + H(+) = 4-CDP-2-C-methyl-D-erythritol + diphosphate. Its pathway is isoprenoid biosynthesis; isopentenyl diphosphate biosynthesis via DXP pathway; isopentenyl diphosphate from 1-deoxy-D-xylulose 5-phosphate: step 2/6. Its function is as follows. Catalyzes the formation of 4-diphosphocytidyl-2-C-methyl-D-erythritol from CTP and 2-C-methyl-D-erythritol 4-phosphate (MEP). The polypeptide is 2-C-methyl-D-erythritol 4-phosphate cytidylyltransferase (Pseudomonas aeruginosa (strain ATCC 15692 / DSM 22644 / CIP 104116 / JCM 14847 / LMG 12228 / 1C / PRS 101 / PAO1)).